Consider the following 259-residue polypeptide: Hydroxyacylglutathione hydrolase (259 aa).

Residues His-56, His-58, Asp-60, His-61, His-112, Asp-133, and His-171 each contribute to the Zn(2+) site.

The protein belongs to the metallo-beta-lactamase superfamily. Glyoxalase II family. Monomer. The cofactor is Zn(2+).

The catalysed reaction is an S-(2-hydroxyacyl)glutathione + H2O = a 2-hydroxy carboxylate + glutathione + H(+). It functions in the pathway secondary metabolite metabolism; methylglyoxal degradation; (R)-lactate from methylglyoxal: step 2/2. In terms of biological role, thiolesterase that catalyzes the hydrolysis of S-D-lactoyl-glutathione to form glutathione and D-lactic acid. The protein is Hydroxyacylglutathione hydrolase of Pseudomonas putida (strain GB-1).